We begin with the raw amino-acid sequence, 338 residues long: Methionyl-tRNA formyltransferase (338 aa).

A (6S)-5,6,7,8-tetrahydrofolate-binding site is contributed by 110–113 (SLLP).

The protein belongs to the Fmt family.

It carries out the reaction L-methionyl-tRNA(fMet) + (6R)-10-formyltetrahydrofolate = N-formyl-L-methionyl-tRNA(fMet) + (6S)-5,6,7,8-tetrahydrofolate + H(+). Attaches a formyl group to the free amino group of methionyl-tRNA(fMet). The formyl group appears to play a dual role in the initiator identity of N-formylmethionyl-tRNA by promoting its recognition by IF2 and preventing the misappropriation of this tRNA by the elongation apparatus. In Synechococcus sp. (strain CC9902), this protein is Methionyl-tRNA formyltransferase.